We begin with the raw amino-acid sequence, 65 residues long: Probable movement protein p8 (65 aa).

The segment covering Met1 to Gly10 has biased composition (polar residues). The tract at residues Met1–Ser47 is disordered. Over residues Asn12–Gln42 the composition is skewed to basic and acidic residues.

It belongs to the carmovirus/necrovirus/panicovirus movement protein p8 family.

Functionally, cell-to-cell movement. The chain is Probable movement protein p8 from Tobacco necrosis virus (strain D) (TNV-D).